The primary structure comprises 772 residues: Mitochondrial intermediate peptidase (772 aa).

Residues 1-37 (MLRTIILKAGSNASIPSPSRQNKLLRFFATAGAVSRT) constitute a mitochondrion transit peptide. Zn(2+) is bound at residue His-558. Glu-559 is an active-site residue. Zn(2+) is bound by residues His-562 and Glu-587.

It belongs to the peptidase M3 family. The cofactor is Zn(2+).

The protein resides in the mitochondrion matrix. It carries out the reaction Release of an N-terminal octapeptide as second stage of processing of some proteins imported into the mitochondrion.. Its activity is regulated as follows. Stimulated by Fe(2+). Cleaves proteins, imported into the mitochondrion, to their mature size. While most mitochondrial precursor proteins are processed to the mature form in one step by mitochondrial processing peptidase (MPP), the sequential cleavage by MIP of an octapeptide after initial processing by MPP is a required step for a subgroup of nuclear-encoded precursor proteins destined for the matrix or the inner membrane. Cleaves precursor proteins of respiratory components, including subunits of the electron transport chain and tricarboxylic acid cycle enzymes, and components of the mitochondrial genetic machinery, including ribosomal proteins, translation factors, and proteins required for mitochondrial DNA metabolism. This Saccharomyces cerevisiae (strain ATCC 204508 / S288c) (Baker's yeast) protein is Mitochondrial intermediate peptidase (OCT1).